Consider the following 37-residue polypeptide: Large ribosomal subunit protein bL36 (37 aa).

Belongs to the bacterial ribosomal protein bL36 family.

The protein is Large ribosomal subunit protein bL36 of Mycoplasma genitalium (strain ATCC 33530 / DSM 19775 / NCTC 10195 / G37) (Mycoplasmoides genitalium).